Here is an 830-residue protein sequence, read N- to C-terminus: MSASSSGGSPRFPSCGKNGVTSLTQKKVLRTPCGAPSVTVTKSHKRGMKGDTVNVRRSVRVKTKVPWMPPGKSSARHVGCKWENPPHCLEITPPSSEKLVSVMRLSDLSTEDDDSGHCKMNRYDKKIDSLMNAVGCLKSEVKMQKGERQMAKRFLEERKEELEEVAHELAETEHENTVLRHNIERIKEEKDFTMLQKKHLQQEKECLMSKLVEAEMDGAAAAKQVMALKDTIGKLKTEKQMTCTDINTLTRQKELLLQKLSTFEETNRTLRDLLREQHCKEDSERLMEQQGTLLKRLAEADSEKARLLLLLQDKDKEVEELLQEIQCEKAQAKTASELSKSMESMRGHLQAQLRCKEAENSRLCMQIKNLERSGNQHKAEVEAIMEQLKELKQKGDRDKETLKKAIRAQKERAEKSEEYAEQLHVQLADKDLYVAEALSTLESWRSRYNQVVKDKGDLELEIIVLNDRVTDLVNQQQSLEEKMREDRDSLVERLHRQTAEYSAFKLENERLKASFAPMEDKLNQAHLEVQQLKASVKNYEGMIDNYKSQVMKTRLEADEVAAQLERCDKENKMLKDEMNKEIEAARRQFQSQLADLQQLPDILKITEAKLAECQDQLQGYERKNIDLTAIISDLRSRIEHQGDKLEMAREKHQASQKENKQLSQKVDELERKLEATSAQNVEFLQVIAKREEAIHQAQLRLEEKTRECGSLARQLESAIEDARRQVEQTKEQALSKERAAQSKILDLETQLSRTKTELGQLRRTRDDADRRYQSRLQDLKDRLEQSESTNRSMQNYVQFLKASYANVFGDAPYTSSYLTSSPIRSRSPPA.

Phosphoserine occurs at positions 73 and 74. Phosphothreonine is present on threonine 92. Phosphoserine; by TSSK4 is present on serine 95. A phosphoserine mark is found at serine 106 and serine 109. Threonine 110 is modified (phosphothreonine). Serine 115 and serine 129 each carry phosphoserine. A Glycyl lysine isopeptide (Lys-Gly) (interchain with G-Cter in SUMO2) cross-link involves residue lysine 138. Serine 139 carries the phosphoserine modification. Positions 144 to 217 form a coiled coil; that stretch reads QKGERQMAKR…MSKLVEAEMD (74 aa). Threonine 231 carries the post-translational modification Phosphothreonine. Coiled-coil stretches lie at residues 245-423 and 461-798; these read DINT…AEQL and EIIV…NYVQ. A phosphoserine mark is found at serine 261 and serine 632. The tract at residues 537-701 is interaction with BBOF1; that stretch reads KNYEGMIDNY…EAIHQAQLRL (165 aa).

Belongs to the ODF2 family. Self-associates. Associates with microtubules and forms a fibrillar structure partially linked to the microtubule network. Interacts via its C-terminus with PLK1. Interacts with ODF1. Interacts with MARK4; the interaction is required for localization of ODF2 to centrioles. Interacts with TSSK4. Interacts with AKNA. Interacts with CFAP58. Interacts with BBOF1. Interacts with CCDC38. Interacts with CCDC42. Post-translationally, tyrosine phosphorylated. Phosphorylated on Ser-95 by TSSK4. Testis-specific (at protein level). Expressed in spermatids at tubular stage V of the spermatogenic cycle. Highly expressed in the cytoplasm of elongating spermatids (tubular stages X/XI). In step 14/15 spermatids of tubular stage III/IV low expression detected. No expression detected in other testicular cells as well as the early round of spermatids.

The protein resides in the cytoplasm. The protein localises to the cytoskeleton. It localises to the microtubule organizing center. Its subcellular location is the centrosome. It is found in the cell projection. The protein resides in the cilium. The protein localises to the centriole. It localises to the spindle pole. Its subcellular location is the flagellum. In terms of biological role, seems to be a major component of sperm tail outer dense fibers (ODF). ODFs are filamentous structures located on the outside of the axoneme in the midpiece and principal piece of the mammalian sperm tail and may help to maintain the passive elastic structures and elastic recoil of the sperm tail. May have a modulating influence on sperm motility. Functions as a general scaffold protein that is specifically localized at the distal/subdistal appendages of mother centrioles. Component of the centrosome matrix required for the localization of PLK1 and NIN to the centrosomes. Required for the formation and/or maintenance of normal CETN1 assembly. The protein is Outer dense fiber protein 2 (Odf2) of Mus musculus (Mouse).